A 196-amino-acid chain; its full sequence is MARSFYSHIKEAWKQPGDGKLAELQWQRKQEWRDQGAIVRIDRPTRLDKARELGYKAKQGVIIARVAVRKGGARKKRFTSGRRSKRQGVNRLGRRTSIQRIAEERAARKYPNLRTLASYWVGEDGSQKWHEIILIDPEHAAIENDDDLNWICDDTHKGRAFRGLTNAGRSNRGLQNRGKGAEHTRPSAGSGSRRGK.

A disordered region spans residues Arg-162 to Lys-196.

It belongs to the eukaryotic ribosomal protein eL15 family.

The protein is Large ribosomal subunit protein eL15 of Haloquadratum walsbyi (strain DSM 16790 / HBSQ001).